The chain runs to 373 residues: 3 beta-hydroxysteroid dehydrogenase/Delta 5--&gt;4-isomerase type 1 (373 aa).

NADP(+)-binding positions include 10 to 15 (GAGGFL), Y155, and K159. The active-site Proton donor is K159. Residues 288 to 308 (LALMYWIGFLLEVVSFLLSPV) traverse the membrane as a helical segment.

Belongs to the 3-beta-HSD family. As to expression, adrenal glands, testes and ovaries.

Its subcellular location is the endoplasmic reticulum membrane. The protein localises to the mitochondrion membrane. It catalyses the reaction a 3beta-hydroxy-Delta(5)-steroid + NAD(+) = a 3-oxo-Delta(5)-steroid + NADH + H(+). It carries out the reaction pregnenolone + NAD(+) = pregn-5-ene-3,20-dione + NADH + H(+). The enzyme catalyses 3beta-hydroxyandrost-5-en-17-one + NAD(+) = androst-5-ene-3,17-dione + NADH + H(+). The catalysed reaction is androst-5-en-3beta,17beta-diol + NAD(+) = 17beta-hydroxy-androst-5-en-3-one + NADH + H(+). It catalyses the reaction a 3beta-hydroxysteroid + NADP(+) = a 3-oxosteroid + NADPH + H(+). It carries out the reaction 5alpha-androstane-3beta,17beta-diol + NADP(+) = 17beta-hydroxy-5alpha-androstan-3-one + NADPH + H(+). The enzyme catalyses 3beta-hydroxy-5alpha-androstan-17-one + NADP(+) = 5alpha-androstan-3,17-dione + NADPH + H(+). The catalysed reaction is a 3-oxo-Delta(5)-steroid = a 3-oxo-Delta(4)-steroid. It catalyses the reaction pregn-5-ene-3,20-dione = progesterone. It carries out the reaction androst-5-ene-3,17-dione = androst-4-ene-3,17-dione. The enzyme catalyses 17beta-hydroxy-androst-5-en-3-one = testosterone. The catalysed reaction is 5alpha-androstane-3beta,17beta-diol + NAD(+) = 17beta-hydroxy-5alpha-androstan-3-one + NADH + H(+). It participates in steroid hormone biosynthesis. Its pathway is steroid metabolism. In terms of biological role, a bifunctional enzyme responsible for the oxidation and isomerization of 3beta-hydroxy-Delta(5)-steroid precursors to 3-oxo-Delta(4)-steroids, an essential step in steroid hormone biosynthesis. Specifically catalyzes the conversion of pregnenolone to progesterone, 17alpha-hydroxypregnenolone to 17alpha-hydroxyprogesterone, dehydroepiandrosterone (DHEA) to 4-androstenedione and androstenediol to testosterone. Additionally, catalyzes the interconversion between 3beta-hydroxy and 3-oxo-5alpha-androstane steroids controlling the bioavalability of the active forms. Specifically converts dihydrotestosterone to its inactive form 5alpha-androstanediol, that does not bind androgen receptor/AR. Also converts androstanedione, a precursor of testosterone and estrone, to epiandrosterone. Expected to use NAD(+) as preferred electron donor for the 3beta-hydroxy-steroid dehydrogenase activity and NADPH for the 3-ketosteroid reductase activity. The protein is 3 beta-hydroxysteroid dehydrogenase/Delta 5--&gt;4-isomerase type 1 (HSD3B1) of Macaca mulatta (Rhesus macaque).